We begin with the raw amino-acid sequence, 706 residues long: G2/M phase-specific E3 ubiquitin-protein ligase (706 aa).

Residues 11–51 (NLACVFCRKNDDCPNKYGEKKTKEKWNLTVHYYCLLMSSGI) form a C2HC pre-PHD-type zinc finger. Residues 79-128 (LKCCVCKKNGASIGCVAPRCKRSYHFPCGLQRECIFQFTGNFASFCWNHR) form a PHD-type 1 zinc finger. A PHD-type 2; degenerate zinc finger spans residues 143 to 193 (PCTICLEFIEPIPSYNILRSPCCKNAWFHRDCLQVQAINAGVFFFRCTICS). A PHD-type 3 zinc finger spans residues 237 to 286 (RCRCKEGRDYNAPDSKWEIKRCQCCGSSGTHLACSSLRSWEQNWECLECR). The HECT domain occupies 371 to 698 (IWTSALDAFR…IRNTLKLEKE (328 aa)).

It localises to the nucleus. The protein localises to the nucleolus. The protein resides in the cytoplasm. The enzyme catalyses S-ubiquitinyl-[E2 ubiquitin-conjugating enzyme]-L-cysteine + [acceptor protein]-L-lysine = [E2 ubiquitin-conjugating enzyme]-L-cysteine + N(6)-ubiquitinyl-[acceptor protein]-L-lysine.. The protein operates within protein modification; protein ubiquitination. Functionally, E3 ubiquitin-protein ligase which accepts ubiquitin from an E2 ubiquitin-conjugating enzyme in the form of a thioester and then directly transfers the ubiquitin to targeted substrates. Essential in early embryonic development to prevent apoptotic death. In Macaca fascicularis (Crab-eating macaque), this protein is G2/M phase-specific E3 ubiquitin-protein ligase (G2E3).